A 775-amino-acid chain; its full sequence is Putative late blight resistance protein homolog R1A-3 (775 aa).

A coiled-coil region spans residues 16 to 39 (PRMNEEIVGFEDVIENLRKKLLSE). Positions 17–237 (RMNEEIVGFE…LSEMEKEVEC (221 aa)) constitute an NB-ARC domain. ATP is bound at residue 50 to 57 (GMPGLGKT). One can recognise an HMA domain in the interval 711–775 (IKKMILQFDI…VGKLIDSGML (65 aa)).

Belongs to the disease resistance NB-LRR family.

Its subcellular location is the cytoplasm. It is found in the membrane. Functionally, confers resistance to late blight (Phytophthora infestans) races carrying the avirulence gene Avr1. Resistance proteins guard the plant against pathogens that contain an appropriate avirulence protein via an indirect interaction with this avirulence protein. That triggers a defense system including the hypersensitive response, which restricts the pathogen growth. The polypeptide is Putative late blight resistance protein homolog R1A-3 (R1A-3) (Solanum demissum (Wild potato)).